Reading from the N-terminus, the 77-residue chain is UPF0291 protein OB1671 (77 aa).

Residues 56–77 form a disordered region; the sequence is DPEGKDVTPQKLRDYQDRNKKH. The segment covering 57-77 has biased composition (basic and acidic residues); sequence PEGKDVTPQKLRDYQDRNKKH.

The protein belongs to the UPF0291 family.

The protein localises to the cytoplasm. In Oceanobacillus iheyensis (strain DSM 14371 / CIP 107618 / JCM 11309 / KCTC 3954 / HTE831), this protein is UPF0291 protein OB1671.